The primary structure comprises 261 residues: Cytochrome c oxidase subunit 3 (261 aa).

Over 1–15 (MAHQAHAYHMVDPSP) the chain is Mitochondrial matrix. Residues 16–34 (WPLTGAIAALLLTSGTAVW) form a helical membrane-spanning segment. The Mitochondrial intermembrane segment spans residues 35–40 (FHFHSL). Residues 41-66 (TLLTLGNILLLLTMYQWWRDIIREGT) form a helical membrane-spanning segment. The Mitochondrial matrix portion of the chain corresponds to 67–72 (FQGHHT). The helical transmembrane segment at 73 to 105 (PPVQKGLRYGMILFITSEVFFFLGFFWAFYHAS) threads the bilayer. The Mitochondrial intermembrane portion of the chain corresponds to 106–128 (LAPTPELGGCWPPAGITTLDPFE). The helical transmembrane segment at 129-152 (VPLLNTAVLLASGVTVTWAHHSIM) threads the bilayer. Residues 153 to 155 (EGE) lie on the Mitochondrial matrix side of the membrane. A helical membrane pass occupies residues 156–183 (RKQTIQALTLTILLGFYFTFLQGMEYYE). Over 184-190 (APFTIAD) the chain is Mitochondrial intermembrane. The chain crosses the membrane as a helical span at residues 191–223 (GVYGSTFFVATGFHGLHVIIGSTFLAVCLLRQV). The Mitochondrial matrix portion of the chain corresponds to 224-232 (QYHFTSEHH). The helical transmembrane segment at 233 to 256 (FGFEAAAWYWHFVDVVWLFLYVSI) threads the bilayer. At 257 to 261 (YWWGS) the chain is on the mitochondrial intermembrane side.

It belongs to the cytochrome c oxidase subunit 3 family. In terms of assembly, component of the cytochrome c oxidase (complex IV, CIV), a multisubunit enzyme composed of 14 subunits. The complex is composed of a catalytic core of 3 subunits MT-CO1, MT-CO2 and MT-CO3, encoded in the mitochondrial DNA, and 11 supernumerary subunits COX4I, COX5A, COX5B, COX6A, COX6B, COX6C, COX7A, COX7B, COX7C, COX8 and NDUFA4, which are encoded in the nuclear genome. The complex exists as a monomer or a dimer and forms supercomplexes (SCs) in the inner mitochondrial membrane with NADH-ubiquinone oxidoreductase (complex I, CI) and ubiquinol-cytochrome c oxidoreductase (cytochrome b-c1 complex, complex III, CIII), resulting in different assemblies (supercomplex SCI(1)III(2)IV(1) and megacomplex MCI(2)III(2)IV(2)).

It is found in the mitochondrion inner membrane. The catalysed reaction is 4 Fe(II)-[cytochrome c] + O2 + 8 H(+)(in) = 4 Fe(III)-[cytochrome c] + 2 H2O + 4 H(+)(out). Its function is as follows. Component of the cytochrome c oxidase, the last enzyme in the mitochondrial electron transport chain which drives oxidative phosphorylation. The respiratory chain contains 3 multisubunit complexes succinate dehydrogenase (complex II, CII), ubiquinol-cytochrome c oxidoreductase (cytochrome b-c1 complex, complex III, CIII) and cytochrome c oxidase (complex IV, CIV), that cooperate to transfer electrons derived from NADH and succinate to molecular oxygen, creating an electrochemical gradient over the inner membrane that drives transmembrane transport and the ATP synthase. Cytochrome c oxidase is the component of the respiratory chain that catalyzes the reduction of oxygen to water. Electrons originating from reduced cytochrome c in the intermembrane space (IMS) are transferred via the dinuclear copper A center (CU(A)) of subunit 2 and heme A of subunit 1 to the active site in subunit 1, a binuclear center (BNC) formed by heme A3 and copper B (CU(B)). The BNC reduces molecular oxygen to 2 water molecules using 4 electrons from cytochrome c in the IMS and 4 protons from the mitochondrial matrix. In Oncorhynchus mykiss (Rainbow trout), this protein is Cytochrome c oxidase subunit 3 (mt-co3).